The sequence spans 278 residues: Transmembrane protein 41B (278 aa).

Positions 1–31 (MQVHERSHTGGHTFQCNHGNEKKAPAAGKVH) are disordered. The next 6 helical transmembrane spans lie at 39 to 59 (MSLL…FLVY), 96 to 116 (FYVE…TFAI), 142 to 162 (CSGL…RPVV), 184 to 204 (LINY…FINI), 212 to 232 (PLKV…FVAI), and 249 to 269 (SWNS…PAIF). Residues 127 to 238 (GFLYPFPLAL…FVAIKAGTTL (112 aa)) form a VTT domain; required for its function in autophagy region.

This sequence belongs to the TMEM41 family.

The protein resides in the endoplasmic reticulum membrane. Its subcellular location is the endomembrane system. It catalyses the reaction a 1,2-diacyl-sn-glycero-3-phospho-L-serine(in) = a 1,2-diacyl-sn-glycero-3-phospho-L-serine(out). The catalysed reaction is cholesterol(in) = cholesterol(out). It carries out the reaction a 1,2-diacyl-sn-glycero-3-phosphocholine(in) = a 1,2-diacyl-sn-glycero-3-phosphocholine(out). The enzyme catalyses a 1,2-diacyl-sn-glycero-3-phosphoethanolamine(in) = a 1,2-diacyl-sn-glycero-3-phosphoethanolamine(out). In terms of biological role, phospholipid scramblase involved in lipid homeostasis and membrane dynamics processes. Has phospholipid scramblase activity toward cholesterol and phosphatidylserine, as well as phosphatidylethanolamine and phosphatidylcholine. Required for autophagosome formation: participates in early stages of autophagosome biogenesis at the endoplasmic reticulum (ER) membrane by reequilibrating the leaflets of the ER as lipids are extracted by atg2 (atg2a or atg2b) to mediate autophagosome assembly. In addition to autophagy, involved in other processes in which phospholipid scramblase activity is required. Required for normal motor neuron development. This is Transmembrane protein 41B from Xenopus laevis (African clawed frog).